A 317-amino-acid polypeptide reads, in one-letter code: Melanocyte-stimulating hormone receptor (317 aa).

Residues 1 to 37 (MPVQGSQRRLLGSLNSTPTATPHLGLAANQTGARCLE) are Extracellular-facing. An N-linked (GlcNAc...) asparagine glycan is attached at N29. Residues 38-63 (MSIPDGLFLSLGLVSLVENVLVVTAI) traverse the membrane as a helical segment. The Cytoplasmic portion of the chain corresponds to 64 to 72 (AKNRNLHSP). A helical membrane pass occupies residues 73-93 (MYCFICCLALSDLLVSGSNML). Residues 94–118 (ETAVTLLLEAGALAARAAVVQQLDN) are Extracellular-facing. The chain crosses the membrane as a helical span at residues 119 to 140 (VIDVITCSSMLSSLCFLGAIAV). Residues 141 to 163 (DRYISIFYALRYHSIVTLPRARR) lie on the Cytoplasmic side of the membrane. The chain crosses the membrane as a helical span at residues 164–183 (AIAAIWVASVLCSTLFIAYY). Residues 184–191 (DHAAVLLC) lie on the Extracellular side of the membrane. Residues 192 to 211 (LVVFFLAMLVLMAVLYVHML) traverse the membrane as a helical segment. The Cytoplasmic portion of the chain corresponds to 212 to 240 (ARACQHAQGIARLHKRQRLAHQGFGLKGA). The chain crosses the membrane as a helical span at residues 241–266 (ATLTILLGIFFLCWGPFFLHLTLIVL). The Extracellular portion of the chain corresponds to 267-279 (CPQHPTCSCIFKN). Residues 280–300 (FNLFLTLIICNAIIDPLIYAF) traverse the membrane as a helical segment. At 301-317 (RSQELRRTLKEVLLCSW) the chain is on the cytoplasmic side. C315 carries the S-palmitoyl cysteine lipid modification.

This sequence belongs to the G-protein coupled receptor 1 family. In terms of assembly, interacts with MGRN1, but does not undergo MGRN1-mediated ubiquitination; this interaction competes with GNAS-binding and thus inhibits agonist-induced cAMP production. Interacts with OPN3; the interaction results in a decrease in MC1R-mediated cAMP signaling and ultimately a decrease in melanin production in melanocytes.

The protein localises to the cell membrane. Functionally, receptor for MSH (alpha, beta and gamma) and ACTH. The activity of this receptor is mediated by G proteins which activate adenylate cyclase. Mediates melanogenesis, the production of eumelanin (black/brown) and phaeomelanin (red/yellow), via regulation of cAMP signaling in melanocytes. This is Melanocyte-stimulating hormone receptor (MC1R) from Macaca nemestrina (Pig-tailed macaque).